The primary structure comprises 278 residues: Octanoyltransferase LipM (278 aa).

The 216-residue stretch at 33–248 folds into the BPL/LPL catalytic domain; the sequence is KKMPPTIRFY…GFEKGLDVEL (216 aa). C150 (acyl-thioester intermediate) is an active-site residue.

It belongs to the octanoyltransferase LipM family. As to quaternary structure, monomer.

It catalyses the reaction octanoyl-[ACP] + L-lysyl-[protein] = N(6)-octanoyl-L-lysyl-[protein] + holo-[ACP] + H(+). Its pathway is protein modification; protein lipoylation via endogenous pathway; protein N(6)-(lipoyl)lysine from octanoyl-[acyl-carrier-protein]. In terms of biological role, catalyzes the transfer of endogenously produced octanoic acid from octanoyl-acyl-carrier-protein onto the lipoyl domain of GcvH, an intermediate carrier during protein lipoylation. The protein is Octanoyltransferase LipM of Bacillus cereus (strain ATCC 14579 / DSM 31 / CCUG 7414 / JCM 2152 / NBRC 15305 / NCIMB 9373 / NCTC 2599 / NRRL B-3711).